We begin with the raw amino-acid sequence, 594 residues long: Adenine deaminase 1 (594 aa).

It belongs to the metallo-dependent hydrolases superfamily. Adenine deaminase family. The cofactor is Mn(2+).

It catalyses the reaction adenine + H2O + H(+) = hypoxanthine + NH4(+). This chain is Adenine deaminase 1, found in Jannaschia sp. (strain CCS1).